Reading from the N-terminus, the 301-residue chain is uncharacterized protein (301 aa).

A Radical SAM core domain is found at 45–286; that stretch reads KELSDGWALN…EELGKMFTEL (242 aa).

This is an uncharacterized protein from Acidianus two-tailed virus (ATV).